Consider the following 239-residue polypeptide: Type III pantothenate kinase (239 aa).

ATP is bound at residue 6–13 (DAGNTRLK). Substrate contacts are provided by residues tyrosine 87 and 94–97 (GADR). Aspartate 96 functions as the Proton acceptor in the catalytic mechanism. Residue threonine 119 coordinates ATP. Serine 169 contributes to the substrate binding site.

This sequence belongs to the type III pantothenate kinase family. Homodimer. NH4(+) serves as cofactor. It depends on K(+) as a cofactor.

It localises to the cytoplasm. It carries out the reaction (R)-pantothenate + ATP = (R)-4'-phosphopantothenate + ADP + H(+). Its pathway is cofactor biosynthesis; coenzyme A biosynthesis; CoA from (R)-pantothenate: step 1/5. Its function is as follows. Catalyzes the phosphorylation of pantothenate (Pan), the first step in CoA biosynthesis. This chain is Type III pantothenate kinase, found in Laribacter hongkongensis (strain HLHK9).